Reading from the N-terminus, the 190-residue chain is Threonylcarbamoyl-AMP synthase (190 aa).

The region spanning G7 to G190 is the YrdC-like domain.

It belongs to the SUA5 family. TsaC subfamily.

It is found in the cytoplasm. The enzyme catalyses L-threonine + hydrogencarbonate + ATP = L-threonylcarbamoyladenylate + diphosphate + H2O. In terms of biological role, required for the formation of a threonylcarbamoyl group on adenosine at position 37 (t(6)A37) in tRNAs that read codons beginning with adenine. Catalyzes the conversion of L-threonine, HCO(3)(-)/CO(2) and ATP to give threonylcarbamoyl-AMP (TC-AMP) as the acyladenylate intermediate, with the release of diphosphate. In Shigella dysenteriae serotype 1 (strain Sd197), this protein is Threonylcarbamoyl-AMP synthase.